The sequence spans 429 residues: Adenylosuccinate synthetase (429 aa).

GTP contacts are provided by residues 12-18 (GDEGKGK) and 40-42 (GHT). Aspartate 13 serves as the catalytic Proton acceptor. Residues aspartate 13 and glycine 40 each contribute to the Mg(2+) site. Residues 13 to 16 (DEGK), 38 to 41 (NAGH), threonine 129, arginine 143, glutamine 223, threonine 238, and arginine 302 each bind IMP. Histidine 41 acts as the Proton donor in catalysis. 298 to 304 (VVTGRKR) provides a ligand contact to substrate. GTP contacts are provided by residues arginine 304, 330 to 332 (KLD), and 412 to 414 (STS).

Belongs to the adenylosuccinate synthetase family. Homodimer. The cofactor is Mg(2+).

It is found in the cytoplasm. It catalyses the reaction IMP + L-aspartate + GTP = N(6)-(1,2-dicarboxyethyl)-AMP + GDP + phosphate + 2 H(+). Its pathway is purine metabolism; AMP biosynthesis via de novo pathway; AMP from IMP: step 1/2. Its function is as follows. Plays an important role in the de novo pathway of purine nucleotide biosynthesis. Catalyzes the first committed step in the biosynthesis of AMP from IMP. The polypeptide is Adenylosuccinate synthetase (Brucella abortus (strain 2308)).